Consider the following 729-residue polypeptide: Fatty acid oxidation complex subunit alpha (729 aa).

The segment at 1 to 189 is enoyl-CoA hydratase/isomerase; sequence MLYKGDTLYL…KIGLVDGVVK (189 aa). Asp296 is a substrate binding site. A 3-hydroxyacyl-CoA dehydrogenase region spans residues 311 to 729; the sequence is ETPKQAAVLG…ARPVGDLKTA (419 aa). Residues Met324, Asp343, 400 to 402, Lys407, and Ser429 contribute to the NAD(+) site; that span reads VVE. The For 3-hydroxyacyl-CoA dehydrogenase activity role is filled by His450. Position 453 (Asn453) interacts with NAD(+). 2 residues coordinate substrate: Asn500 and Tyr660. Residues 708 to 729 form a disordered region; it reads RHNEPYYPPVEPARPVGDLKTA.

This sequence in the N-terminal section; belongs to the enoyl-CoA hydratase/isomerase family. The protein in the C-terminal section; belongs to the 3-hydroxyacyl-CoA dehydrogenase family. As to quaternary structure, heterotetramer of two alpha chains (FadB) and two beta chains (FadA).

The enzyme catalyses a (3S)-3-hydroxyacyl-CoA + NAD(+) = a 3-oxoacyl-CoA + NADH + H(+). The catalysed reaction is a (3S)-3-hydroxyacyl-CoA = a (2E)-enoyl-CoA + H2O. It catalyses the reaction a 4-saturated-(3S)-3-hydroxyacyl-CoA = a (3E)-enoyl-CoA + H2O. It carries out the reaction (3S)-3-hydroxybutanoyl-CoA = (3R)-3-hydroxybutanoyl-CoA. The enzyme catalyses a (3Z)-enoyl-CoA = a 4-saturated (2E)-enoyl-CoA. The catalysed reaction is a (3E)-enoyl-CoA = a 4-saturated (2E)-enoyl-CoA. It participates in lipid metabolism; fatty acid beta-oxidation. Involved in the aerobic and anaerobic degradation of long-chain fatty acids via beta-oxidation cycle. Catalyzes the formation of 3-oxoacyl-CoA from enoyl-CoA via L-3-hydroxyacyl-CoA. It can also use D-3-hydroxyacyl-CoA and cis-3-enoyl-CoA as substrate. The chain is Fatty acid oxidation complex subunit alpha from Shigella flexneri serotype 5b (strain 8401).